A 490-amino-acid polypeptide reads, in one-letter code: Aspartyl/glutamyl-tRNA(Asn/Gln) amidotransferase subunit B (490 aa).

This sequence belongs to the GatB/GatE family. GatB subfamily. In terms of assembly, heterotrimer of A, B and C subunits.

It carries out the reaction L-glutamyl-tRNA(Gln) + L-glutamine + ATP + H2O = L-glutaminyl-tRNA(Gln) + L-glutamate + ADP + phosphate + H(+). The enzyme catalyses L-aspartyl-tRNA(Asn) + L-glutamine + ATP + H2O = L-asparaginyl-tRNA(Asn) + L-glutamate + ADP + phosphate + 2 H(+). Allows the formation of correctly charged Asn-tRNA(Asn) or Gln-tRNA(Gln) through the transamidation of misacylated Asp-tRNA(Asn) or Glu-tRNA(Gln) in organisms which lack either or both of asparaginyl-tRNA or glutaminyl-tRNA synthetases. The reaction takes place in the presence of glutamine and ATP through an activated phospho-Asp-tRNA(Asn) or phospho-Glu-tRNA(Gln). This Methylobacterium nodulans (strain LMG 21967 / CNCM I-2342 / ORS 2060) protein is Aspartyl/glutamyl-tRNA(Asn/Gln) amidotransferase subunit B.